A 203-amino-acid polypeptide reads, in one-letter code: QQNLPQRYIELVVVADRRVFMKYNSDLNIIRTRVHEIVNIINGFYRSLNIDVSLVNLEIWSGQDPLTIQSSSSNTLNSEGLWREKVLLNKKKKDNAQLLTAIEFKCETLGKAYLNSMCNPRSSVGIVKDHSPINLLVAVTMAHELGHNLGMEHDGKDCLRGASLCIMRPGLTPGRSYEFSDDSMGYYQKFLNQYKPQCILNKP.

The region spanning 7-203 is the Peptidase M12B domain; it reads RYIELVVVAD…YKPQCILNKP (197 aa). Residues Glu10 and Asp94 each contribute to the Ca(2+) site. 2 cysteine pairs are disulfide-bonded: Cys118–Cys198 and Cys158–Cys165. Residue His143 coordinates Zn(2+). The active site involves Glu144. 2 residues coordinate Zn(2+): His147 and His153. Positions 198 and 201 each coordinate Ca(2+).

The protein belongs to the venom metalloproteinase (M12B) family. P-I subfamily. As to quaternary structure, monomer. Requires Zn(2+) as cofactor. Expressed by the venom gland.

It is found in the secreted. The catalysed reaction is Cleavage of 1-Phe-|-Val-2, 5-His-|-Leu-6, 14-Ala-|-Leu-15, 15-Leu-|-Tyr-16, and 16-Tyr-|-Leu-17 of insulin B chain.. Its function is as follows. Has no significant hemorrhagic activity, but inactivates serpins by limited proteolysis of their reactive-site loops. This chain is Snake venom metalloproteinase adamalysin-2, found in Crotalus adamanteus (Eastern diamondback rattlesnake).